We begin with the raw amino-acid sequence, 172 residues long: Large ribosomal subunit protein uL10 (172 aa).

The protein belongs to the universal ribosomal protein uL10 family. Part of the ribosomal stalk of the 50S ribosomal subunit. The N-terminus interacts with L11 and the large rRNA to form the base of the stalk. The C-terminus forms an elongated spine to which L12 dimers bind in a sequential fashion forming a multimeric L10(L12)X complex.

Functionally, forms part of the ribosomal stalk, playing a central role in the interaction of the ribosome with GTP-bound translation factors. This is Large ribosomal subunit protein uL10 from Rhizobium meliloti (strain 1021) (Ensifer meliloti).